Consider the following 582-residue polypeptide: Hemagglutinin-neuraminidase (582 aa).

Residues 1-34 (MEPSKLFTMSDNATFAPGPVVNAADKKTFRTCFR) are Intravirion-facing. A helical transmembrane segment spans residues 35-55 (ILVLSVQAVTLILVIVTLGEL). The Virion surface segment spans residues 56 to 582 (VRMINDQGLS…LPVLTRLTIT (527 aa)). 3 disulfides stabilise this stretch: cysteine 178–cysteine 202, cysteine 192–cysteine 253, and cysteine 244–cysteine 257. 2 N-linked (GlcNAc...) asparagine; by host glycosylation sites follow: asparagine 284 and asparagine 329. Disulfide bonds link cysteine 350–cysteine 471, cysteine 382–cysteine 392, and cysteine 465–cysteine 475. Asparagine 400 and asparagine 448 each carry an N-linked (GlcNAc...) asparagine; by host glycan. Asparagine 507 carries an N-linked (GlcNAc...) asparagine; by host glycan. Cysteine 545 and cysteine 556 are oxidised to a cystine.

Belongs to the paramyxoviruses hemagglutinin-neuraminidase family. Homotetramer; composed of disulfide-linked homodimers. Interacts with F protein trimer.

It localises to the virion membrane. The protein resides in the host cell membrane. It catalyses the reaction Hydrolysis of alpha-(2-&gt;3)-, alpha-(2-&gt;6)-, alpha-(2-&gt;8)- glycosidic linkages of terminal sialic acid residues in oligosaccharides, glycoproteins, glycolipids, colominic acid and synthetic substrates.. Attaches the virus to alpha-2,3-linked sialic acid-containing cell receptors and thereby initiating infection. Binding of HN protein to the receptor induces a conformational change that allows the F protein to trigger virion/cell membranes fusion. Binds to the glycan motifs sialyl Lewis (SLe) and GM2 ganglioside (GM2-glycan). Its function is as follows. Neuraminidase activity ensures the efficient spread of the virus by dissociating the mature virions from the neuraminic acid containing glycoproteins. This is Hemagglutinin-neuraminidase from Mumps orthorubulavirus (MuV).